The primary structure comprises 450 residues: Carbamoyl phosphate synthase arginine-specific small chain (450 aa).

Residues 1-29 (MFAARLFKAMPARASAFPSVNASIQSRFM) constitute a mitochondrion transit peptide. In terms of domain architecture, Glutamine amidotransferase type-1 spans 220 to 407 (HVAVIDCGVK…LDSVRKYKAS (188 aa)). Cys-296 serves as the catalytic Nucleophile. Active-site residues include His-380 and Glu-382.

It belongs to the CarA family. Heterodimer composed of 2 chains; the small (or glutamine) chain promotes the hydrolysis of glutamine to ammonia, which is used by the large (or ammonia) chain to synthesize carbamoyl phosphate.

The protein localises to the mitochondrion matrix. It carries out the reaction hydrogencarbonate + L-glutamine + 2 ATP + H2O = carbamoyl phosphate + L-glutamate + 2 ADP + phosphate + 2 H(+). It catalyses the reaction L-glutamine + H2O = L-glutamate + NH4(+). The protein operates within amino-acid biosynthesis; L-arginine biosynthesis; carbamoyl phosphate from bicarbonate: step 1/1. Its function is as follows. Small subunit of the arginine-specific carbamoyl phosphate synthase (CPSase). CPSase catalyzes the formation of carbamoyl phosphate from the ammonia moiety of glutamine, carbonate, and phosphate donated by ATP, the first step of the arginine biosynthetic pathway. The small subunit (glutamine amidotransferase) binds and cleaves glutamine to supply the large subunit with the substrate ammonia. In Aspergillus oryzae (strain ATCC 42149 / RIB 40) (Yellow koji mold), this protein is Carbamoyl phosphate synthase arginine-specific small chain (cpa1).